Reading from the N-terminus, the 511-residue chain is mRNA export factor (511 aa).

Over residues 1-15 (MATDIDMLIDLGLDL) the composition is skewed to low complexity. A disordered region spans residues 1-244 (MATDIDMLID…ERKAPAADTI (244 aa)). The short motif at 5 to 17 (IDMLIDLGLDLSD) is the Nuclear export signal element. Ser16 and Ser18 each carry phosphoserine; by host. Composition is skewed to acidic residues over residues 16 to 26 (SDSDLDEDPPE) and 35 to 51 (LESDSSGECSSSDEDME). The interval 104–112 (VWSRLGARR) is interaction with host ALYREF. The Nuclear localization signal signature appears at 110-138 (ARRPSCSPEQHGGKVARLQPPPTKAQPAR). Phosphoserine; by host is present on Ser114. Arg138 is subject to Dimethylated arginine; by host. The tract at residues 138 to 152 (RGGRRGRRRGRGRGG) is RGG-box. Basic residues predominate over residues 139-149 (GGRRGRRRGRG). Arg148 carries the omega-N-methylarginine; by host modification. Dimethylated arginine; by host is present on Arg150. Pro residues predominate over residues 213 to 232 (APPPLMTLAIAPPPADPRAP). 4 residues coordinate Zn(2+): Cys399, His478, Cys482, and Cys487. The CHC2-type zinc finger occupies 399–487 (CYLKARGLCG…HRQECSSRVC (89 aa)).

Belongs to the HHV-1 ICP27 protein family. In terms of assembly, interacts with host RBP1; this interaction facilitates the RNA polymerase recruitment to viral transcription sites. Interacts (via the RGG box) with host ALYREF/THOC4; this interaction recruits ALYREF to viral replication compartments and probably directs viral mRNA to the TAP/NFX1 pathway. Interacts (via the RGG box) with host SRPK1; this interaction relocalizes SRPK1 to the nucleus and seems to alter its activity. Interacts with ICP4; this interaction modulates ICP4 DNA-binding activity. Interacts with host NXF1; this interaction allows efficient export of HSV-1 early and late transcripts. Post-translationally, methylated within the RGG box possibly by host PRMT1. When hypomethylated, ICP27 is exported to the cytoplasm earlier and more rapidly. Phosphorylated.

It is found in the host cytoplasm. The protein localises to the host nucleus. In terms of biological role, multifunctional regulator of the expression of viral genes that contributes to the shutoff of host protein synthesis and mediates nuclear export of viral intronless mRNAs. Early in infection, this immediate early (EI) protein mediates the inhibition of cellular splicing. This results in the accumulation of unprocessed 3'end pre-mRNAs which can't be exported from the nucleus. Cellular protein synthesis is thereby shut off early after virus infection. Later in the infection, it helps recruit cellular RNA polymerase II to viral replication sites and promotes the nuclear export of viral intronless mRNAs by interacting with mRNAs and host NXF1/TAP. ICP27 binds to NUP62 which may provide facilitated viral mRNA export and may compete with some host cell transport receptors for binding and inhibit cellular nucleocytoplasmic transport pathways. Also stimulates translation of viral transcripts. Repression of host gene expression blocks the cell cycle at the G1 phase and prevents apoptosis. Seems to silence the 3' splice site of the promyelocytic leukemia (PML) intron 7a, thereby switching PML isoforms from PML-II to PML-V. This could be linked to the accelerated mRNA export induced by ICP27 which might not provide sufficient time for PML pre-mRNA to be spliced in the nucleus. This chain is mRNA export factor, found in Human herpesvirus 1 (strain HFEM) (HHV-1).